A 1065-amino-acid polypeptide reads, in one-letter code: N-terminal acetyltransferase B complex auxiliary subunit NAA25 (1065 aa).

One copy of the TPR repeat lies at 294 to 327 (VDKLRIQGRLLARANDYSAAVDVYKKILELSPDD).

This sequence belongs to the MDM20/NAA25 family. Ubiquitously expressed, with a higher expression in vascular bundles, hydathodes, leaf primordia and the base of the trichomes.

It localises to the cytoplasm. In terms of biological role, auxiliary subunit of the NatB N-alpha-acetyltransferase complex. Required for flowering time regulation and for vegetative and reproductive plant development. This is N-terminal acetyltransferase B complex auxiliary subunit NAA25 from Arabidopsis thaliana (Mouse-ear cress).